The primary structure comprises 256 residues: Calsenilin (256 aa).

The segment at 1-20 (MQPAKEVTKASDGSLLGDLG) is disordered. Position 14 is a phosphoserine (Ser14). A Glycyl lysine isopeptide (Lys-Gly) (interchain with G-Cter in SUMO1) cross-link involves residue Lys26. 2 S-palmitoyl cysteine lipidation sites follow: Cys45 and Cys46. At Ser60 the chain carries Phosphoserine. Residue Ser63 is modified to Phosphoserine; by CK1. The region spanning 67–123 (LELSTVRHQPEGLDQLQAQTKFTKKELQSLYRGFKNECPTGLVDEDTFKLIYAQFFP) is the EF-hand 1; degenerate domain. Lys90 is covalently cross-linked (Glycyl lysine isopeptide (Lys-Gly) (interchain with G-Cter in SUMO1)). EF-hand domains follow at residues 126–161 (DATT…LLRG), 162–197 (TVHE…IYDM), and 210–245 (APAE…DENI). Positions 175, 177, 179, 181, 186, 223, 225, 227, and 234 each coordinate Ca(2+). Positions 243-256 (ENIMSSMQLFENVI) are interaction with KCND2.

It belongs to the recoverin family. As to quaternary structure, binds to DNA as a homomultimer. Dimerization is induced by binding to calcium. Interacts with the C-terminus of PSEN1 and PSEN2 and with PSEN2 CTF subunit. Associates with KCN1. Component of heteromultimeric potassium channels. Identified in potassium channel complexes containing KCND1, KCND2, KCND3, KCNIP1, KCNIP2, KCNIP3, KCNIP4, DPP6 and DPP10. Interacts with KCND2 and KCND3. Post-translationally, palmitoylated. Palmitoylation enhances association with the plasma membrane. In terms of processing, proteolytically cleaved by caspase-3. Phosphorylation at Ser-63 inhibits cleavage by CASP3. Highly expressed in brain. Widely expressed at lower levels. Expression levels are elevated in brain cortex regions affected by Alzheimer disease.

It is found in the cytoplasm. It localises to the cell membrane. The protein resides in the endoplasmic reticulum. The protein localises to the golgi apparatus. Its subcellular location is the nucleus. Functionally, calcium-dependent transcriptional repressor that binds to the DRE element of genes including PDYN and FOS. Affinity for DNA is reduced upon binding to calcium and enhanced by binding to magnesium. Seems to be involved in nociception. Regulatory subunit of Kv4/D (Shal)-type voltage-gated rapidly inactivating A-type potassium channels, such as KCND2/Kv4.2 and KCND3/Kv4.3. Modulates channel expression at the cell membrane, gating characteristics, inactivation kinetics and rate of recovery from inactivation in a calcium-dependent and isoform-specific manner. In terms of biological role, may play a role in the regulation of PSEN2 proteolytic processing and apoptosis. Together with PSEN2 involved in modulation of amyloid-beta formation. In Homo sapiens (Human), this protein is Calsenilin (KCNIP3).